Here is a 135-residue protein sequence, read N- to C-terminus: C-type lectin LmsL (135 aa).

4 disulfide bridges follow: Cys-3–Cys-14, Cys-31–Cys-131, Cys-38–Cys-133, and Cys-106–Cys-123. The region spanning 10–132 (MNGLCYKIFD…CESKNAFLCQ (123 aa)) is the C-type lectin domain. Ca(2+)-binding residues include Gln-96, Asp-98, Glu-104, Asn-119, and Asp-120. The Galactose-binding motif lies at 96–98 (QPD).

The protein belongs to the true venom lectin family. Homodimer; disulfide-linked. As to expression, expressed by the venom gland.

The protein localises to the secreted. Functionally, galactose-binding protein which recognizes specific carbohydrate structures and agglutinates a variety of animal cells by binding to cell-surface glycoproteins and glycolipids. Is a calcium-dependent lectin. Shows high hemagglutinating activity, that is inhibited by lactose, galactose and inositol. In Lachesis stenophrys (Central American bushmaster), this protein is C-type lectin LmsL.